Reading from the N-terminus, the 172-residue chain is Antibacterial protein PR-39 (172 aa).

The signal sequence occupies residues 1–29; sequence METQRASLCLGRWSLWLLLLGLVVPSASA. The residue at position 30 (Gln30) is a Pyrrolidone carboxylic acid. A propeptide spanning residues 30-130 is cleaved from the precursor; the sequence is QALSYREAVL…DISCNEIQSV (101 aa). Residues 61-80 form a disordered region; that stretch reads DQPPKADEDPGTPKPVSFTV. Intrachain disulfides connect Cys85–Cys96 and Cys107–Cys124. Residues 130-172 form a disordered region; sequence VRRRPRPPYLPRPRPPPFFPPRLPPRIPPGFPPRFPPRFPGKR. Over residues 136 to 172 the composition is skewed to pro residues; it reads PPYLPRPRPPPFFPPRLPPRIPPGFPPRFPPRFPGKR. A Proline amide modification is found at Pro169.

Belongs to the cathelicidin family. Small intestine and bone marrow.

It is found in the secreted. Exerts a potent antimicrobial activity against both E.coli and B.megaterium. This Sus scrofa (Pig) protein is Antibacterial protein PR-39 (PR39).